Consider the following 328-residue polypeptide: GTP 3',8-cyclase (328 aa).

Residues 9–229 (GFGRDVRYLR…DNGLNTGGPA (221 aa)) enclose the Radical SAM core domain. Arg18 contacts GTP. Residues Cys25 and Cys29 each coordinate [4Fe-4S] cluster. Tyr31 is an S-adenosyl-L-methionine binding site. Cys32 contacts [4Fe-4S] cluster. Arg60 is a binding site for GTP. Gly64 contributes to the S-adenosyl-L-methionine binding site. Thr94 serves as a coordination point for GTP. Ser118 provides a ligand contact to S-adenosyl-L-methionine. Residue Lys154 coordinates GTP. Met188 lines the S-adenosyl-L-methionine pocket. [4Fe-4S] cluster contacts are provided by Cys252 and Cys255. 257–259 (RVR) lines the GTP pocket. Position 269 (Cys269) interacts with [4Fe-4S] cluster.

This sequence belongs to the radical SAM superfamily. MoaA family. As to quaternary structure, monomer and homodimer. [4Fe-4S] cluster is required as a cofactor.

It catalyses the reaction GTP + AH2 + S-adenosyl-L-methionine = (8S)-3',8-cyclo-7,8-dihydroguanosine 5'-triphosphate + 5'-deoxyadenosine + L-methionine + A + H(+). The protein operates within cofactor biosynthesis; molybdopterin biosynthesis. In terms of biological role, catalyzes the cyclization of GTP to (8S)-3',8-cyclo-7,8-dihydroguanosine 5'-triphosphate. The sequence is that of GTP 3',8-cyclase from Rhodobacter capsulatus (Rhodopseudomonas capsulata).